Consider the following 341-residue polypeptide: Probable long-chain-alcohol O-fatty-acyltransferase 9 (341 aa).

7 consecutive transmembrane segments (helical) span residues 9–29, 36–56, 82–102, 122–142, 146–166, 231–251, and 295–315; these read IIVW…SANI, LFSV…FSSV, GPLF…CFPI, FAIK…SHFL, VLLS…LGPL, MGYL…YFYI, and RLLT…PLFI.

Belongs to the wax synthase family.

It localises to the membrane. The catalysed reaction is a long chain fatty alcohol + a fatty acyl-CoA = a wax ester + CoA. Catalyzes the final step in the synthesis of long-chain linear esters (waxes). The sequence is that of Probable long-chain-alcohol O-fatty-acyltransferase 9 from Arabidopsis thaliana (Mouse-ear cress).